A 223-amino-acid chain; its full sequence is Alpha-S2-casein (223 aa).

Residues methionine 1 to alanine 15 form the signal peptide. Serine 23, serine 24, serine 25, serine 72, serine 73, serine 74, serine 77, serine 145, serine 147, serine 151, and serine 159 each carry phosphoserine. The segment at residues serine 77 to arginine 141 is a repeat. The stretch at residues serine 159–leucine 223 is a repeat.

It belongs to the alpha-casein family. In terms of tissue distribution, mammary gland specific. Secreted in milk.

It is found in the secreted. Its function is as follows. Important role in the capacity of milk to transport calcium phosphate. The polypeptide is Alpha-S2-casein (CSN1S2) (Ovis aries (Sheep)).